Here is a 75-residue protein sequence, read N- to C-terminus: MHHCRPHMMAPIVHPTHCCEHHTFSKTIVPHIHPQHTTNVNHQHFQHVHYFPHTFSNVDPATHQHFQAGKPCCDY.

This chain is Spore coat protein D (cotD), found in Bacillus subtilis (strain 168).